A 317-amino-acid polypeptide reads, in one-letter code: Nuclear distribution protein nudE homolog (317 aa).

Positions 29–180 (TDVKQEYDEF…LKQELNVKSR (152 aa)) form a coiled coil. Positions 186-205 (NGTSVPTANDTNTVNSSMNS) are disordered.

It belongs to the nudE family.

It localises to the cytoplasm. Its subcellular location is the cytoskeleton. It is found in the microtubule organizing center. The protein localises to the centrosome. The protein resides in the spindle. Its function is as follows. Chaperone protein with functions in nuclear localization. Required for centrosome duplication and formation and function of the mitotic spindle. In postmitotic neurons, acts with nudC downstream of dar1 to ensure correct positioning of the nuclei in primary dendrites and as a consequence, is required for determining multipolar neuron morphology. The sequence is that of Nuclear distribution protein nudE homolog from Drosophila melanogaster (Fruit fly).